We begin with the raw amino-acid sequence, 56 residues long: Conotoxin Cal6.41b (56 aa).

The signal sequence occupies residues Met-1–Thr-23. Cystine bridges form between Cys-27–Cys-41, Cys-33–Cys-50, and Cys-40–Cys-54.

Expressed by the venom duct.

Its subcellular location is the secreted. Its function is as follows. Probable neurotoxin. This is Conotoxin Cal6.41b from Californiconus californicus (California cone).